The following is a 410-amino-acid chain: Regulator of microtubule dynamics protein 2 (410 aa).

Residues 9–28 form a helical membrane-spanning segment; it reads LILGIMVGTAGISLLLLWYH. Ser51 bears the Phosphoserine mark. Residues 68-110 adopt a coiled-coil conformation; that stretch reads FQERQLQILEKLNELLTNMEELKEEIRFLKEAIPKLEEYIQDE. Ser121 bears the Phosphoserine mark. Basic residues predominate over residues 122-131; that stretch reads PQHRARKRRL. The interval 122–164 is disordered; it reads PQHRARKRRLPTIQSSATSNSSEEAESEGGYITANTDTEEQSF. Thr139 bears the Phosphothreonine mark. Tyr152 bears the Phosphotyrosine mark. 2 positions are modified to phosphothreonine: Thr154 and Thr157.

It belongs to the RMDN family. Interacts with microtubules.

It is found in the membrane. Its subcellular location is the cytoplasm. The protein resides in the cytoskeleton. The protein localises to the spindle. It localises to the spindle pole. The protein is Regulator of microtubule dynamics protein 2 (RMDN2) of Homo sapiens (Human).